Reading from the N-terminus, the 326-residue chain is Tryptophan--tRNA ligase (326 aa).

ATP-binding positions include 11-13 (QPT) and 19-20 (GN). The short motif at 12–20 (PTGQIHLGN) is the 'HIGH' region element. L-tryptophan is bound at residue aspartate 135. ATP is bound by residues 147–149 (GED), valine 186, and 195–199 (KMSKS). The short motif at 195–199 (KMSKS) is the 'KMSKS' region element.

It belongs to the class-I aminoacyl-tRNA synthetase family. In terms of assembly, homodimer.

It is found in the cytoplasm. The catalysed reaction is tRNA(Trp) + L-tryptophan + ATP = L-tryptophyl-tRNA(Trp) + AMP + diphosphate + H(+). In terms of biological role, catalyzes the attachment of tryptophan to tRNA(Trp). In Helicobacter pylori (strain ATCC 700392 / 26695) (Campylobacter pylori), this protein is Tryptophan--tRNA ligase.